The chain runs to 500 residues: L-arabinose isomerase (500 aa).

Glutamate 306, glutamate 333, histidine 350, and histidine 450 together coordinate Mn(2+).

The protein belongs to the arabinose isomerase family. Homohexamer. Requires Mn(2+) as cofactor.

It catalyses the reaction beta-L-arabinopyranose = L-ribulose. It participates in carbohydrate degradation; L-arabinose degradation via L-ribulose; D-xylulose 5-phosphate from L-arabinose (bacterial route): step 1/3. Its function is as follows. Catalyzes the conversion of L-arabinose to L-ribulose. The polypeptide is L-arabinose isomerase (Klebsiella pneumoniae subsp. pneumoniae (strain ATCC 700721 / MGH 78578)).